The sequence spans 61 residues: Putative antitoxin RelB2 (61 aa).

In terms of biological role, antitoxin component of a type II toxin-antitoxin (TA) system. Its cognate toxin is RelE2 (Potential). This is Putative antitoxin RelB2 (relB2) from Methanocaldococcus jannaschii (strain ATCC 43067 / DSM 2661 / JAL-1 / JCM 10045 / NBRC 100440) (Methanococcus jannaschii).